The primary structure comprises 264 residues: MVKPLPRLRLQGFNNLTKALSFNIYDVCYARTEEERQRYIEYIDEEYNADRLTQILTDVAEIIGANILNVARQDYDPQGASVTILISEEPVIDKKQAGKELISDAVVAHMDKSHITVHTYPETHPQEGIATFRADIDVATCGVISPLKALNYLIESLESDIVIMDYRVRGFTRDVKGKKHYIDHKINSIQNFLAKNIKSRYEMFDVNVYQENIFHTKMHLKDFDLDQYLFEEKAKNLSFKERMKIEALLKREIEELFHGRNLSE.

Serine 113 serves as the catalytic Schiff-base intermediate with substrate; via pyruvic acid. Serine 113 carries the post-translational modification Pyruvic acid (Ser); by autocatalysis. Catalysis depends on histidine 118, which acts as the Proton acceptor; for processing activity. The active-site Proton donor; for catalytic activity is cysteine 141.

It belongs to the prokaryotic AdoMetDC family. Type 2 subfamily. In terms of assembly, heterooctamer of four alpha and four beta chains arranged as a tetramer of alpha/beta heterodimers. Pyruvate is required as a cofactor. In terms of processing, is synthesized initially as an inactive proenzyme. Formation of the active enzyme involves a self-maturation process in which the active site pyruvoyl group is generated from an internal serine residue via an autocatalytic post-translational modification. Two non-identical subunits are generated from the proenzyme in this reaction, and the pyruvate is formed at the N-terminus of the alpha chain, which is derived from the carboxyl end of the proenzyme. The post-translation cleavage follows an unusual pathway, termed non-hydrolytic serinolysis, in which the side chain hydroxyl group of the serine supplies its oxygen atom to form the C-terminus of the beta chain, while the remainder of the serine residue undergoes an oxidative deamination to produce ammonia and the pyruvoyl group blocking the N-terminus of the alpha chain.

The catalysed reaction is S-adenosyl-L-methionine + H(+) = S-adenosyl 3-(methylsulfanyl)propylamine + CO2. Its pathway is amine and polyamine biosynthesis; S-adenosylmethioninamine biosynthesis; S-adenosylmethioninamine from S-adenosyl-L-methionine: step 1/1. Its function is as follows. Catalyzes the decarboxylation of S-adenosylmethionine to S-adenosylmethioninamine (dcAdoMet), the propylamine donor required for the synthesis of the polyamines spermine and spermidine from the diamine putrescine. This is S-adenosylmethionine decarboxylase proenzyme from Stenotrophomonas maltophilia (strain R551-3).